The sequence spans 374 residues: Chaperone protein DnaJ (374 aa).

The J domain occupies 5-70; that stretch reads DYYEVLGVAR…NKRRMYDSHG (66 aa). The CR-type zinc finger occupies 130–207; it reads GVERRIEIPT…CHGNGRVEED (78 aa). 8 residues coordinate Zn(2+): cysteine 143, cysteine 146, cysteine 159, cysteine 162, cysteine 181, cysteine 184, cysteine 195, and cysteine 198. CXXCXGXG motif repeat units follow at residues 143 to 150, 159 to 166, 181 to 188, and 195 to 202; these read CGDCDGSG, CNVCHGRG, CHNCGGRG, and CKTCHGNG.

This sequence belongs to the DnaJ family. In terms of assembly, homodimer. The cofactor is Zn(2+).

Its subcellular location is the cytoplasm. Participates actively in the response to hyperosmotic and heat shock by preventing the aggregation of stress-denatured proteins and by disaggregating proteins, also in an autonomous, DnaK-independent fashion. Unfolded proteins bind initially to DnaJ; upon interaction with the DnaJ-bound protein, DnaK hydrolyzes its bound ATP, resulting in the formation of a stable complex. GrpE releases ADP from DnaK; ATP binding to DnaK triggers the release of the substrate protein, thus completing the reaction cycle. Several rounds of ATP-dependent interactions between DnaJ, DnaK and GrpE are required for fully efficient folding. Also involved, together with DnaK and GrpE, in the DNA replication of plasmids through activation of initiation proteins. The polypeptide is Chaperone protein DnaJ (Stenotrophomonas maltophilia (strain K279a)).